The chain runs to 644 residues: Exoribonuclease 2 (644 aa).

An RNB domain is found at R189–K516. The 83-residue stretch at D561–V643 folds into the S1 motif domain.

It belongs to the RNR ribonuclease family. RNase II subfamily.

The protein resides in the cytoplasm. The catalysed reaction is Exonucleolytic cleavage in the 3'- to 5'-direction to yield nucleoside 5'-phosphates.. Functionally, involved in mRNA degradation. Hydrolyzes single-stranded polyribonucleotides processively in the 3' to 5' direction. This Escherichia coli (strain UTI89 / UPEC) protein is Exoribonuclease 2.